The following is a 107-amino-acid chain: UPF0145 protein YbjQ (107 aa).

Belongs to the UPF0145 family.

The protein is UPF0145 protein YbjQ of Escherichia coli O139:H28 (strain E24377A / ETEC).